The following is a 119-amino-acid chain: MFRSVALAVLALLFLSGLEAIQRAPKIQVYSRHPPENGKSNFLNCYVSGFHPSDIEVDLLKNGEKMGKVEHSDLSFSKDWSFYLLYYTEFTPNEKDEYACRVNHVTLSGPRTVKWDRDM.

Positions 1–20 (MFRSVALAVLALLFLSGLEA) are cleaved as a signal peptide. The 90-residue stretch at 25 to 114 (PKIQVYSRHP…VTLSGPRTVK (90 aa)) folds into the Ig-like C1-type domain. Cysteines 45 and 100 form a disulfide.

The protein belongs to the beta-2-microglobulin family. As to quaternary structure, heterodimer of an alpha chain and a beta chain. Beta-2-microglobulin is the beta-chain of major histocompatibility complex class I molecules.

Its subcellular location is the secreted. In terms of biological role, component of the class I major histocompatibility complex (MHC). Involved in the presentation of peptide antigens to the immune system. The protein is Beta-2-microglobulin (B2M) of Chlorocebus aethiops (Green monkey).